The chain runs to 826 residues: Golgin subfamily A member 6-like protein 25 (826 aa).

Disordered regions lie at residues 1–100 (MWPQ…HQEA), 297–327 (QEQEEKIREQEEKMRRQEEMMWEKEEKMRRQ), 345–425 (MHEQ…EMWR), 502–534 (QEEMWREEEKMHEQEKIWEEEKRQEQEDKMWRQ), 547–646 (RQEE…EQEE), and 658–826 (QEEM…MQEH). Basic and acidic residues predominate over residues 31-52 (MSKETRQSKLAEAKEQLTDHHP). Composition is skewed to polar residues over residues 53–63 (QTNPSVGTAAS) and 71–83 (NNGTNPETTTSGG). Over residues 86-100 (SPEDEQKASHQHQEA) the composition is skewed to basic and acidic residues. Residues 157 to 822 (LEQALSAVAT…EVRLRQQEEK (666 aa)) are a coiled coil. Basic and acidic residues-rich tracts occupy residues 658–678 (QEEMMQEQEEKMGEQEEKMWE) and 686–826 (QEEK…MQEH).

Belongs to the GOLGA6 family.

This Homo sapiens (Human) protein is Golgin subfamily A member 6-like protein 25.